The primary structure comprises 211 residues: Peptidyl-prolyl cis-trans isomerase FKBP14 (211 aa).

The signal sequence occupies residues M1–G19. Cysteines 38 and 96 form a disulfide. In terms of domain architecture, PPIase FKBP-type spans G45 to R135. In terms of domain architecture, EF-hand 1 spans R135–K170. Ca(2+) is bound by residues D148, N150, D152, R154, and E159. A glycan (N-linked (GlcNAc...) asparagine) is linked at N176. The 33-residue stretch at H179–L211 folds into the EF-hand 2 domain. Residues D192, D194, D196, and E203 each coordinate Ca(2+). A Prevents secretion from ER motif is present at residues H208–L211.

In terms of assembly, monomer. Homodimer. Interacts with type III, type IV and type X collagens.

The protein localises to the endoplasmic reticulum lumen. The catalysed reaction is [protein]-peptidylproline (omega=180) = [protein]-peptidylproline (omega=0). Inhibited by tacrolimus/FK506. PPIase which accelerates the folding of proteins during protein synthesis. Has a preference for substrates containing 4-hydroxylproline modifications, including type III collagen. May also target type VI and type X collagens. The chain is Peptidyl-prolyl cis-trans isomerase FKBP14 (Fkbp14) from Mus musculus (Mouse).